Here is a 69-residue protein sequence, read N- to C-terminus: MPLTVKCPICKTPVEWAPQSEFKPFCSERCKLIDLADWASEKHAIPVKSEFDLDALDEFDLDEDAFFKE.

Zn(2+) is bound by residues C7, C10, C26, and C30.

It belongs to the DNA gyrase inhibitor YacG family. As to quaternary structure, interacts with GyrB. Requires Zn(2+) as cofactor.

In terms of biological role, inhibits all the catalytic activities of DNA gyrase by preventing its interaction with DNA. Acts by binding directly to the C-terminal domain of GyrB, which probably disrupts DNA binding by the gyrase. The polypeptide is DNA gyrase inhibitor YacG (Shewanella sp. (strain W3-18-1)).